Reading from the N-terminus, the 393-residue chain is Pyridoxamine--pyruvate transaminase (393 aa).

Pyridoxal 5'-phosphate is bound by residues glutamate 68, tyrosine 95, and threonine 146. Lysine 197 bears the N6-(pyridoxal phosphate)lysine mark. Residue arginine 345 coordinates pyridoxal 5'-phosphate.

The protein belongs to the class-V pyridoxal-phosphate-dependent aminotransferase family. As to quaternary structure, homotetramer. Requires pyridoxal 5'-phosphate as cofactor.

It catalyses the reaction pyridoxamine + pyruvate = pyridoxal + L-alanine. In terms of biological role, catalyzes a reversible transamination reaction between pyridoxamine and pyruvate to form pyridoxal and L-alanine. This Mesorhizobium japonicum (strain LMG 29417 / CECT 9101 / MAFF 303099) (Mesorhizobium loti (strain MAFF 303099)) protein is Pyridoxamine--pyruvate transaminase (ppaT).